Consider the following 1260-residue polypeptide: Methionine synthase (1260 aa).

The 321-residue stretch at 13-333 folds into the Hcy-binding domain; sequence FGIIRKILSE…DHIRAFCNAI (321 aa). Residues cysteine 255, cysteine 318, and cysteine 319 each coordinate Zn(2+). The 262-residue stretch at 364-625 folds into the Pterin-binding domain; sequence FVNVGERCNV…IPKDLLKLVE (262 aa). In terms of domain architecture, B12-binding N-terminal spans 655–749; sequence EVEEWRNKPV…FMEEEKRLKR (95 aa). Methylcob(III)alamin is bound by residues glutamate 699, 775–779, histidine 778, serine 823, threonine 827, and alanine 879; that span reads GDVHD. In terms of domain architecture, B12-binding spans 766-883; sequence GVVVLATVKG…VHVLDASRSV (118 aa). The region spanning 916 to 1256 is the AdoMet activation domain; it reads SLKDRKYTSL…LSSILSYDRL (341 aa). S-adenosyl-L-methionine is bound by residues aspartate 966, arginine 1163, and 1218-1219; that span reads YF.

This sequence belongs to the vitamin-B12 dependent methionine synthase family. Methylcob(III)alamin is required as a cofactor. Zn(2+) serves as cofactor.

The catalysed reaction is (6S)-5-methyl-5,6,7,8-tetrahydrofolate + L-homocysteine = (6S)-5,6,7,8-tetrahydrofolate + L-methionine. It functions in the pathway amino-acid biosynthesis; L-methionine biosynthesis via de novo pathway; L-methionine from L-homocysteine (MetH route): step 1/1. Catalyzes the transfer of a methyl group from methyl-cobalamin to homocysteine, yielding enzyme-bound cob(I)alamin and methionine. Subsequently, remethylates the cofactor using methyltetrahydrofolate. The sequence is that of Methionine synthase (mtr) from Dictyostelium discoideum (Social amoeba).